Reading from the N-terminus, the 106-residue chain is UPF0060 membrane protein Mrad2831_0929 (106 aa).

4 consecutive transmembrane segments (helical) span residues 3-23 (LLAYAAAALAEIAGCFAFWAW), 30-50 (AWWTLPGLASLAAFAALLTLV), 59-79 (FAAYGGVYVAASVLWLWLAEG), and 87-104 (LAGSAVCLAGTALILLGR).

The protein belongs to the UPF0060 family.

It localises to the cell inner membrane. The protein is UPF0060 membrane protein Mrad2831_0929 of Methylobacterium radiotolerans (strain ATCC 27329 / DSM 1819 / JCM 2831 / NBRC 15690 / NCIMB 10815 / 0-1).